Reading from the N-terminus, the 74-residue chain is Kappa-scoloptoxin(07)-Ssm2e (74 aa).

Residues 1-19 form the signal peptide; it reads MLVFYALLFVSVFSNTVMG. Positions 20-41 are excised as a propeptide; the sequence is ATIDMPIPKPILREAIEEIDVN.

It belongs to the scoloptoxin-07 family. Post-translationally, contains 3 disulfide bonds. Expressed by the venom gland.

It is found in the secreted. In terms of biological role, inhibits voltage-gated potassium channels. This is Kappa-scoloptoxin(07)-Ssm2e from Scolopendra mutilans (Chinese red-headed centipede).